We begin with the raw amino-acid sequence, 681 residues long: Protein asunder (681 aa).

A disordered region spans residues 574-619 (PGASHLRSYTESPLSPERLEPTSSASNSSSSILKASKRRMSSSGQR). The Nuclear localization signal (NLS) signature appears at 606 to 612 (LKASKRR).

It belongs to the Integrator subunit 13 family. As to quaternary structure, belongs to the multiprotein complex Integrator, at least composed of IntS1, IntS2, IntS3, IntS4, omd/IntS5, IntS6, defl/IntS7, IntS8, IntS9, IntS10, IntS11, IntS12, asun/IntS13, IntS14 and IntS15. The core complex associates with protein phosphatase 2A subunits mts/PP2A and Pp2A-29B, to form the Integrator-PP2A (INTAC) complex. Phosphorylated.

The protein resides in the nucleus. The protein localises to the cytoplasm. Its subcellular location is the perinuclear region. Its function is as follows. Component of the integrator complex, a multiprotein complex that terminates RNA polymerase II (Pol II) transcription in the promoter-proximal region of genes. The integrator complex provides a quality checkpoint during transcription elongation by driving premature transcription termination of transcripts that are unfavorably configured for transcriptional elongation: the complex terminates transcription by (1) catalyzing dephosphorylation of the C-terminal domain (CTD) of Pol II subunit Polr2A/Rbp1 and Spt5, and (2) degrading the exiting nascent RNA transcript via endonuclease activity. The integrator complex is also involved in the 3'-end processing of the U7 snRNA, and also the spliceosomal snRNAs U1, U2, U4 and U5. This is Protein asunder (asun) from Drosophila virilis (Fruit fly).